A 543-amino-acid polypeptide reads, in one-letter code: Lipoyl synthase, apicoplast (543 aa).

Positions 1–63 (MAYFFDFPTD…LFSLLSASQS (63 aa)) are cleaved as a signal peptide. The [4Fe-4S] cluster site is built by cysteine 252, cysteine 257, cysteine 263, cysteine 278, cysteine 282, cysteine 285, and serine 493. The 219-residue stretch at 264–482 (WNGGTATLIL…QDIAEEMGFK (219 aa)) folds into the Radical SAM core domain.

It belongs to the radical SAM superfamily. Lipoyl synthase family. [4Fe-4S] cluster serves as cofactor.

The protein localises to the plastid. It localises to the apicoplast. The catalysed reaction is [[Fe-S] cluster scaffold protein carrying a second [4Fe-4S](2+) cluster] + N(6)-octanoyl-L-lysyl-[protein] + 2 oxidized [2Fe-2S]-[ferredoxin] + 2 S-adenosyl-L-methionine + 4 H(+) = [[Fe-S] cluster scaffold protein] + N(6)-[(R)-dihydrolipoyl]-L-lysyl-[protein] + 4 Fe(3+) + 2 hydrogen sulfide + 2 5'-deoxyadenosine + 2 L-methionine + 2 reduced [2Fe-2S]-[ferredoxin]. The protein operates within protein modification; protein lipoylation via endogenous pathway; protein N(6)-(lipoyl)lysine from octanoyl-[acyl-carrier-protein]: step 2/2. Catalyzes the radical-mediated insertion of two sulfur atoms into the C-6 and C-8 positions of the octanoyl moiety bound to the lipoyl domains of lipoate-dependent enzymes, thereby converting the octanoylated domains into lipoylated derivatives. This chain is Lipoyl synthase, apicoplast, found in Toxoplasma gondii.